The following is a 122-amino-acid chain: Putative iron-sulfur cluster insertion protein ErpA (122 aa).

Positions 50, 114, and 116 each coordinate iron-sulfur cluster.

This sequence belongs to the HesB/IscA family. As to quaternary structure, homodimer. Iron-sulfur cluster serves as cofactor.

In terms of biological role, required for insertion of 4Fe-4S clusters. This Bordetella petrii (strain ATCC BAA-461 / DSM 12804 / CCUG 43448) protein is Putative iron-sulfur cluster insertion protein ErpA.